The following is a 355-amino-acid chain: Butyrate kinase 1 (355 aa).

Belongs to the acetokinase family.

It is found in the cytoplasm. It catalyses the reaction butanoate + ATP = butanoyl phosphate + ADP. It functions in the pathway lipid metabolism; butanoate metabolism. In terms of biological role, catalyzes the conversion of butyryl-CoA through butyryl phosphate to butyrate. The protein is Butyrate kinase 1 (buk1) of Clostridium acetobutylicum (strain ATCC 824 / DSM 792 / JCM 1419 / IAM 19013 / LMG 5710 / NBRC 13948 / NRRL B-527 / VKM B-1787 / 2291 / W).